We begin with the raw amino-acid sequence, 300 residues long: Ribosomal RNA small subunit methyltransferase H (300 aa).

Residues 46 to 48 (GGH), Asp-65, Phe-92, Asp-107, and Gln-114 each bind S-adenosyl-L-methionine.

The protein belongs to the methyltransferase superfamily. RsmH family.

It is found in the cytoplasm. It carries out the reaction cytidine(1402) in 16S rRNA + S-adenosyl-L-methionine = N(4)-methylcytidine(1402) in 16S rRNA + S-adenosyl-L-homocysteine + H(+). Its function is as follows. Specifically methylates the N4 position of cytidine in position 1402 (C1402) of 16S rRNA. The polypeptide is Ribosomal RNA small subunit methyltransferase H (Prochlorococcus marinus (strain MIT 9312)).